The following is a 434-amino-acid chain: Enolase (434 aa).

Residue Gln163 participates in (2R)-2-phosphoglycerate binding. Catalysis depends on Glu205, which acts as the Proton donor. 3 residues coordinate Mg(2+): Asp242, Glu291, and Asp318. (2R)-2-phosphoglycerate contacts are provided by Lys343, Arg372, Ser373, and Lys394. The Proton acceptor role is filled by Lys343.

This sequence belongs to the enolase family. It depends on Mg(2+) as a cofactor.

Its subcellular location is the cytoplasm. It localises to the secreted. It is found in the cell surface. The protein localises to the cell wall. It carries out the reaction (2R)-2-phosphoglycerate = phosphoenolpyruvate + H2O. It functions in the pathway carbohydrate degradation; glycolysis; pyruvate from D-glyceraldehyde 3-phosphate: step 4/5. Catalyzes the reversible conversion of 2-phosphoglycerate (2-PG) into phosphoenolpyruvate (PEP). It is essential for the degradation of carbohydrates via glycolysis. This chain is Enolase, found in Streptococcus pneumoniae serotype 2 (strain D39 / NCTC 7466).